The following is a 258-amino-acid chain: Cobalt-precorrin-4 C(11)-methyltransferase (258 aa).

It belongs to the precorrin methyltransferase family. In terms of assembly, homodimer.

It catalyses the reaction Co-precorrin-4 + S-adenosyl-L-methionine = Co-precorrin-5A + S-adenosyl-L-homocysteine + H(+). It participates in cofactor biosynthesis; adenosylcobalamin biosynthesis; cob(II)yrinate a,c-diamide from sirohydrochlorin (anaerobic route): step 4/10. Its function is as follows. Catalyzes the methylation of C-11 in cobalt-precorrin-4 to form cobalt-precorrin-5A. This is Cobalt-precorrin-4 C(11)-methyltransferase (cbiF) from Priestia megaterium (Bacillus megaterium).